A 390-amino-acid chain; its full sequence is Formate-dependent phosphoribosylglycinamide formyltransferase (390 aa).

N(1)-(5-phospho-beta-D-ribosyl)glycinamide contacts are provided by residues 14–15 (EL) and E74. Residues R106, K147, 152 to 157 (SSGKGQ), 187 to 190 (EQFI), and E195 each bind ATP. Positions 111–304 (DLAAQELGIT…EFDLHARAIM (194 aa)) constitute an ATP-grasp domain. Positions 263 and 275 each coordinate Mg(2+). N(1)-(5-phospho-beta-D-ribosyl)glycinamide is bound by residues D282, K351, and 358–359 (RR).

This sequence belongs to the PurK/PurT family. As to quaternary structure, homodimer.

It carries out the reaction N(1)-(5-phospho-beta-D-ribosyl)glycinamide + formate + ATP = N(2)-formyl-N(1)-(5-phospho-beta-D-ribosyl)glycinamide + ADP + phosphate + H(+). Its pathway is purine metabolism; IMP biosynthesis via de novo pathway; N(2)-formyl-N(1)-(5-phospho-D-ribosyl)glycinamide from N(1)-(5-phospho-D-ribosyl)glycinamide (formate route): step 1/1. Its function is as follows. Involved in the de novo purine biosynthesis. Catalyzes the transfer of formate to 5-phospho-ribosyl-glycinamide (GAR), producing 5-phospho-ribosyl-N-formylglycinamide (FGAR). Formate is provided by PurU via hydrolysis of 10-formyl-tetrahydrofolate. The polypeptide is Formate-dependent phosphoribosylglycinamide formyltransferase (Erythrobacter litoralis (strain HTCC2594)).